Reading from the N-terminus, the 300-residue chain is Geranylgeranyl pyrophosphate synthase (300 aa).

An N-acetylmethionine modification is found at M1. Isopentenyl diphosphate is bound by residues K25, R28, and H57. The Mg(2+) site is built by D64 and D68. R73 is a binding site for dimethylallyl diphosphate. R74 provides a ligand contact to isopentenyl diphosphate. Dimethylallyl diphosphate contacts are provided by K151, T152, Q185, K202, and K212.

This sequence belongs to the FPP/GGPP synthase family. Homohexamer; trimer of homodimers. Mg(2+) is required as a cofactor.

It is found in the cytoplasm. Its subcellular location is the perinuclear region. It localises to the myofibril. The protein resides in the sarcomere. The protein localises to the z line. It carries out the reaction isopentenyl diphosphate + dimethylallyl diphosphate = (2E)-geranyl diphosphate + diphosphate. The catalysed reaction is isopentenyl diphosphate + (2E)-geranyl diphosphate = (2E,6E)-farnesyl diphosphate + diphosphate. It catalyses the reaction isopentenyl diphosphate + (2E,6E)-farnesyl diphosphate = (2E,6E,10E)-geranylgeranyl diphosphate + diphosphate. The protein operates within isoprenoid biosynthesis; farnesyl diphosphate biosynthesis; farnesyl diphosphate from geranyl diphosphate and isopentenyl diphosphate: step 1/1. It participates in isoprenoid biosynthesis; geranyl diphosphate biosynthesis; geranyl diphosphate from dimethylallyl diphosphate and isopentenyl diphosphate: step 1/1. Its pathway is isoprenoid biosynthesis; geranylgeranyl diphosphate biosynthesis; geranylgeranyl diphosphate from farnesyl diphosphate and isopentenyl diphosphate: step 1/1. Functionally, catalyzes the trans-addition of the three molecules of isopentenyl diphosphate (IPP) onto dimethylallyl pyrophosphate (DMAPP) to form geranylgeranyl pyrophosphate, an important precursor of carotenoids and geranylated proteins. This chain is Geranylgeranyl pyrophosphate synthase, found in Mus musculus (Mouse).